Here is a 50-residue protein sequence, read N- to C-terminus: Defensin-like protein 1 (50 aa).

4 cysteine pairs are disulfide-bonded: cysteine 2/cysteine 50, cysteine 14/cysteine 35, cysteine 20/cysteine 44, and cysteine 24/cysteine 46.

This sequence belongs to the DEFL family.

It is found in the secreted. In terms of biological role, possesses antimicrobial activity sensitive to inorganic cations. Binds specifically to the fungal plasma membrane. Has no inhibitory effect on insect gut alpha-amylase. In Aesculus hippocastanum (Horse chestnut), this protein is Defensin-like protein 1.